A 257-amino-acid chain; its full sequence is Thiazole synthase (257 aa).

Lys98 serves as the catalytic Schiff-base intermediate with DXP. Residues Gly159, 185 to 186 (AG), and 207 to 208 (NT) contribute to the 1-deoxy-D-xylulose 5-phosphate site.

Belongs to the ThiG family. As to quaternary structure, homotetramer. Forms heterodimers with either ThiH or ThiS.

It localises to the cytoplasm. The catalysed reaction is [ThiS sulfur-carrier protein]-C-terminal-Gly-aminoethanethioate + 2-iminoacetate + 1-deoxy-D-xylulose 5-phosphate = [ThiS sulfur-carrier protein]-C-terminal Gly-Gly + 2-[(2R,5Z)-2-carboxy-4-methylthiazol-5(2H)-ylidene]ethyl phosphate + 2 H2O + H(+). The protein operates within cofactor biosynthesis; thiamine diphosphate biosynthesis. Catalyzes the rearrangement of 1-deoxy-D-xylulose 5-phosphate (DXP) to produce the thiazole phosphate moiety of thiamine. Sulfur is provided by the thiocarboxylate moiety of the carrier protein ThiS. In vitro, sulfur can be provided by H(2)S. This is Thiazole synthase from Anaeromyxobacter dehalogenans (strain 2CP-C).